A 398-amino-acid chain; its full sequence is MVKRVHIFDWHKEHAKKVEEFAGWEMPIWYSSIKEEHLAVRNGVGIFDVSHMGEFIFRGKDALEFLQYVTTNDISKPPAISGTYTLVLNERGAVKDETLVFNLGNDTYMMVCDSDAFEKLEAWFNAIKRGIEKFGSIDLEIENKTYDMAMFSVQGPKARDLAKDLFGIDINDLWWFQAKEVELDGIKMLLSRSGYTGENGWEVYFEDKNPYHPNPEKRGRPEKALHVWERILEEGEKYGIKPAGLGARDTLRLEAGYTLYGNETKELQLLSTDIDEVTPLQANLDFAIFWDKEFIGKEALLKQKERGLGRKMVHFKMVDRGIPREGYKVLANGEVIGEVTSGTLSPLLGIGIGIAFVKEEYAKPGLEIEVEIRGKPKRAVTVSPPFYDPKKYGAFREE.

Belongs to the GcvT family. The glycine cleavage system is composed of four proteins: P, T, L and H.

It carries out the reaction N(6)-[(R)-S(8)-aminomethyldihydrolipoyl]-L-lysyl-[protein] + (6S)-5,6,7,8-tetrahydrofolate = N(6)-[(R)-dihydrolipoyl]-L-lysyl-[protein] + (6R)-5,10-methylene-5,6,7,8-tetrahydrofolate + NH4(+). Functionally, the glycine cleavage system catalyzes the degradation of glycine. This chain is Probable aminomethyltransferase, found in Thermococcus gammatolerans (strain DSM 15229 / JCM 11827 / EJ3).